Reading from the N-terminus, the 290-residue chain is Small ribosomal subunit protein bS6 (290 aa).

Residues 208-233 (VEEAKTTAKKPAAPKMSAAERAKVDG) form a disordered region.

The protein belongs to the bacterial ribosomal protein bS6 family.

Functionally, binds together with bS18 to 16S ribosomal RNA. The polypeptide is Small ribosomal subunit protein bS6 (Mesoplasma florum (strain ATCC 33453 / NBRC 100688 / NCTC 11704 / L1) (Acholeplasma florum)).